Reading from the N-terminus, the 172-residue chain is Large ribosomal subunit protein uL10 (172 aa).

This sequence belongs to the universal ribosomal protein uL10 family. As to quaternary structure, part of the ribosomal stalk of the 50S ribosomal subunit. The N-terminus interacts with L11 and the large rRNA to form the base of the stalk. The C-terminus forms an elongated spine to which L12 dimers bind in a sequential fashion forming a multimeric L10(L12)X complex.

Its function is as follows. Forms part of the ribosomal stalk, playing a central role in the interaction of the ribosome with GTP-bound translation factors. The chain is Large ribosomal subunit protein uL10 from Rhizobium johnstonii (strain DSM 114642 / LMG 32736 / 3841) (Rhizobium leguminosarum bv. viciae).